A 139-amino-acid chain; its full sequence is D-ribose pyranase (139 aa).

H20 serves as the catalytic Proton donor. Residues D28, H106, and 128–130 each bind substrate; that span reads YAN.

The protein belongs to the RbsD / FucU family. RbsD subfamily. Homodecamer.

It localises to the cytoplasm. It carries out the reaction beta-D-ribopyranose = beta-D-ribofuranose. It participates in carbohydrate metabolism; D-ribose degradation; D-ribose 5-phosphate from beta-D-ribopyranose: step 1/2. In terms of biological role, catalyzes the interconversion of beta-pyran and beta-furan forms of D-ribose. The polypeptide is D-ribose pyranase (Aliivibrio fischeri (strain ATCC 700601 / ES114) (Vibrio fischeri)).